A 312-amino-acid chain; its full sequence is L-lactate dehydrogenase (312 aa).

Residues valine 11, aspartate 32, arginine 37, and 76 to 77 (GA) each bind NAD(+). Substrate is bound by residues glutamine 79, arginine 85, and 117–120 (NPVD). NAD(+) is bound by residues 115-117 (VSN) and threonine 140. 145-148 (DTAR) is a substrate binding site. Residues arginine 150 and histidine 165 each contribute to the beta-D-fructose 1,6-bisphosphate site. Catalysis depends on histidine 172, which acts as the Proton acceptor. The residue at position 217 (tyrosine 217) is a Phosphotyrosine. Position 226 (threonine 226) interacts with substrate.

This sequence belongs to the LDH/MDH superfamily. LDH family. Homotetramer.

It is found in the cytoplasm. It catalyses the reaction (S)-lactate + NAD(+) = pyruvate + NADH + H(+). It participates in fermentation; pyruvate fermentation to lactate; (S)-lactate from pyruvate: step 1/1. Allosterically activated by fructose 1,6-bisphosphate (FBP). In terms of biological role, catalyzes the conversion of lactate to pyruvate. The protein is L-lactate dehydrogenase of Pseudothermotoga lettingae (strain ATCC BAA-301 / DSM 14385 / NBRC 107922 / TMO) (Thermotoga lettingae).